The following is a 406-amino-acid chain: Isocitrate dehydrogenase [NADP] (406 aa).

Positions 72, 75, 77, and 82 each coordinate NADP(+). Residues serine 94, asparagine 96, arginine 100, glutamate 110, and arginine 132 each contribute to the D-threo-isocitrate site. The Mn(2+) site is built by aspartate 250, aspartate 273, and aspartate 277. The NADP(+) site is built by glycine 308, threonine 309, valine 310, histidine 313, and asparagine 326.

This sequence belongs to the isocitrate and isopropylmalate dehydrogenases family. In terms of assembly, homodimer. Mg(2+) is required as a cofactor. The cofactor is Mn(2+).

It carries out the reaction D-threo-isocitrate + NADP(+) = 2-oxoglutarate + CO2 + NADPH. Catalyzes the oxidative decarboxylation of isocitrate to 2-oxoglutarate and carbon dioxide with the concomitant reduction of NADP(+). The sequence is that of Isocitrate dehydrogenase [NADP] (icd) from Sphingobium yanoikuyae (Sphingomonas yanoikuyae).